The primary structure comprises 722 residues: MSQEKASSPSGKMDGEKPVDASEEKRKEGGKKKSKDGGGDGGRAELNPWPEYINTRLDMYNKLKAEHDSILAEKAAKDSKPIKVTLPDGKQVDAESWKTTPYQIACGISQGLADNTVVAKVNKVVWDLDRPLETDCTLELLKFEDEEAQAVYWHSSAHIMGEAMERVYGGCLCYGPPIENGFYYDMYLEEGGVSSNDFSSLETLCKKIIKEKQTFERLEVKKETLLEMFKYNKFKCRILNEKVNTPTTTVYRCGPLIDLCRGPHVRHTGKIKTLKIHKNSSTYWEGKADMETLQRIYGISFPDPKLLKEWEKFQEEAKNRDHRKIGRDQELYFFHELSPGSCFFLPKGAYIYNTLMEFIRSEYRKRGFQEVVTPNIFNSRLWMTSGHWQHYSENMFSFEVEKEQFALKPMNCPGHCLMFDHRPRSWRELPLRLADFGVLHRNELSGALTGLTRVRRFQQDDAHIFCAMEQIEDEIKGCLDFLRTVYSVFGFSFKLNLSTRPEKFLGDIEIWNQAEKQLENSLNEFGEKWELNPGDGAFYGPKIDIQIKDAIGRYHQCATIQLDFQLPIRFNLTYVSHDGDDKKRPVIVHRAILGSVERMIAILTENYGGKWPFWLSPRQVMVVPVGPTCDEYAQKVRQQFHDAKFMADTDLDPGCTLNKKIRNAQLAQYNFILVVGEKEKASGTVNIRTRDNKVHGERTVEETVRRLQQLKQTRSKQAEEEF.

Residues 1–10 are compositionally biased toward polar residues; the sequence is MSQEKASSPS. The interval 1–48 is disordered; that stretch reads MSQEKASSPSGKMDGEKPVDASEEKRKEGGKKKSKDGGGDGGRAELNP. Over residues 13-27 the composition is skewed to basic and acidic residues; sequence MDGEKPVDASEEKRK. The TGS domain maps to 78–142; the sequence is DSKPIKVTLP…ETDCTLELLK (65 aa). The residue at position 242 (K242) is an N6-acetyllysine. Phosphothreonine is present on T245. Residue Y297 is modified to Phosphotyrosine. T452 bears the Phosphothreonine mark.

This sequence belongs to the class-II aminoacyl-tRNA synthetase family. Homodimer. In terms of processing, ISGylated.

Its subcellular location is the cytoplasm. It carries out the reaction tRNA(Thr) + L-threonine + ATP = L-threonyl-tRNA(Thr) + AMP + diphosphate + H(+). Functionally, catalyzes the attachment of threonine to tRNA(Thr) in a two-step reaction: threonine is first activated by ATP to form Thr-AMP and then transferred to the acceptor end of tRNA(Thr). Also edits incorrectly charged tRNA(Thr) via its editing domain, at the post-transfer stage. This chain is Threonine--tRNA ligase 1, cytoplasmic (Tars1), found in Mus musculus (Mouse).